Consider the following 351-residue polypeptide: Protein-glutamate methylesterase/protein-glutamine glutaminase (351 aa).

Residues 3 to 120 (KTLVVDDSAL…EISKIENELV (118 aa)) form the Response regulatory domain. Asp-54 bears the 4-aspartylphosphate mark. The CheB-type methylesterase domain occupies 160–347 (ILIGSSTGGP…EQIVRMIEVK (188 aa)). Active-site residues include Ser-165, His-192, and Asp-289.

The protein belongs to the CheB family. Phosphorylated by CheA. Phosphorylation of the N-terminal regulatory domain activates the methylesterase activity.

It localises to the cytoplasm. It carries out the reaction [protein]-L-glutamate 5-O-methyl ester + H2O = L-glutamyl-[protein] + methanol + H(+). It catalyses the reaction L-glutaminyl-[protein] + H2O = L-glutamyl-[protein] + NH4(+). Functionally, involved in chemotaxis. Part of a chemotaxis signal transduction system that modulates chemotaxis in response to various stimuli. Catalyzes the demethylation of specific methylglutamate residues introduced into the chemoreceptors (methyl-accepting chemotaxis proteins or MCP) by CheR. Also mediates the irreversible deamidation of specific glutamine residues to glutamic acid. The sequence is that of Protein-glutamate methylesterase/protein-glutamine glutaminase from Methanococcoides burtonii (strain DSM 6242 / NBRC 107633 / OCM 468 / ACE-M).